Reading from the N-terminus, the 1011-residue chain is Liprin-beta-1 (1011 aa).

At Ser37 the chain carries Phosphoserine. Position 39 is a phosphothreonine (Thr39). Ser40 is subject to Phosphoserine. Positions 156–405 (QQELLSRTSL…VPEEFHTTIL (250 aa)) form a coiled coil. Lys322 is modified (N6-acetyllysine). Disordered stretches follow at residues 420–439 (ETSEKSKLTPKPETSFEEND) and 463–634 (KSSS…RDLG). Phosphoserine occurs at positions 434 and 466. Residues 470–492 (LKKETSDGEKETIQKTSEDRAPA) are compositionally biased toward basic and acidic residues. A Glycyl lysine isopeptide (Lys-Gly) (interchain with G-Cter in SUMO2) cross-link involves residue Lys471. Phosphoserine is present on residues Ser523 and Ser540. Residues 546-556 (ETEKETAEHLD) show a composition bias toward basic and acidic residues. Residue Ser579 is modified to Phosphoserine. Over residues 584–598 (KKSRGIMKLFGKLRR) the composition is skewed to basic residues. Residues Ser601 and Ser636 each carry the phosphoserine modification. SAM domains lie at 647-711 (WTKE…LGSE) and 719-782 (LDFN…LRIN). Residue Ser794 is modified to Phosphoserine. One can recognise an SAM 3 domain in the interval 804–876 (VQKWTNHRVM…ATHFNLLIGA (73 aa)). A phosphoserine mark is found at Ser999, Ser1001, and Ser1003. The residue at position 1005 (Thr1005) is a Phosphothreonine.

The protein belongs to the liprin family. Liprin-beta subfamily. As to quaternary structure, forms homodimers and heterodimers. Interacts with S100A4 in a Ca(2+)-dependent mode. Part of a cortical microtubule stabilization complex (CMSC) composed of KANK1, PPFIA1, PPFIBP1, ERC1/ELKS, PHLDB2/LL5beta, CLASPs, KIF21A and possibly additional interactors; within CMSCs KANK1 and PHLDB2/LL5beta seem to be the core components for recruiting microtubule-binding proteins KIF21A and CLASPs, whereas PPFIA1, PPFIBP1 and ERC1/ELKS serve as scaffolds for protein clustering. Interacts with KANK1 (via CC1 domain, residues 244-339). In terms of tissue distribution, widely expressed. Absent in liver.

The protein resides in the cytoplasm. Its subcellular location is the cell cortex. In terms of biological role, may regulate the disassembly of focal adhesions. Did not bind receptor-like tyrosine phosphatases type 2A. This Homo sapiens (Human) protein is Liprin-beta-1 (PPFIBP1).